The following is a 396-amino-acid chain: Sialyltransferase-like protein 2 (396 aa).

Topologically, residues 1-6 are cytoplasmic; it reads MKRRHL. The helical; Signal-anchor for type II membrane protein transmembrane segment at 7-23 threads the bilayer; sequence PPVLVLLLLSILSLSFR. The Lumenal segment spans residues 24-396; that stretch reads RRLLVLQGPP…FTVPPVRLHR (373 aa). Residues asparagine 72, asparagine 260, and asparagine 304 are each glycosylated (N-linked (GlcNAc...) asparagine).

This sequence belongs to the glycosyltransferase 29 family.

It is found in the golgi apparatus membrane. Its function is as follows. Does not possess sialyltransferase-like activity in vitro. This chain is Sialyltransferase-like protein 2, found in Oryza sativa subsp. indica (Rice).